The sequence spans 261 residues: Peroxiredoxin PRX1, mitochondrial (261 aa).

A mitochondrion-targeting transit peptide spans 1-13 (MFSRICSAQLKRT). The Thioredoxin domain maps to 49 to 212 (LRINSDAPNF…VLRVIDALQL (164 aa)). Phosphoserine is present on serine 53. Cysteine 91 (cysteine sulfenic acid (-SOH) intermediate) is an active-site residue.

This sequence belongs to the peroxiredoxin family. Prx6 subfamily. Homodimer; disulfide-linked.

Its subcellular location is the mitochondrion. It catalyses the reaction a hydroperoxide + 2 glutathione = an alcohol + glutathione disulfide + H2O. The catalysed reaction is [glutaredoxin]-dithiol + a hydroperoxide = [glutaredoxin]-disulfide + an alcohol + H2O. Its function is as follows. Thiol-specific peroxidase that catalyzes the reduction of hydrogen peroxide and organic hydroperoxides to water and alcohols, respectively. Plays a role in cell protection against oxidative stress by detoxifying peroxides and as sensor of hydrogen peroxide-mediated signaling events. Involved in mitochondrial protection of cadmium-induced oxidative stress. The chain is Peroxiredoxin PRX1, mitochondrial from Saccharomyces cerevisiae (strain ATCC 204508 / S288c) (Baker's yeast).